The chain runs to 367 residues: C-glycoside deglycosidase alpha subunit (367 aa).

E146 contacts Mg(2+). Residue H148 is the Proton acceptor of the active site. Mg(2+) contacts are provided by D178, H276, and E312.

Belongs to the C-glycoside deglycosidase alpha subunit family. As to quaternary structure, heterodimer composed of an alpha subunit (CarB1) and a beta subunit (CarC1). Requires Mg(2+) as cofactor.

The catalysed reaction is 3''-dehydroisovitexin = 1,5-anhydro-D-erythro-hex-1-en-3-ulose + apigenin. Activity is strongly reduced in the presence of chelating agents. Its function is as follows. Carbon-carbon bond-cleaving enzyme which participates in the metabolism of C-glycosides. Acts on the C6-glycosylated compound 3''-dehydroisovitexin (3''-oxo-isovitexin). Shows weak activity with 3''-dehydroisoorientin (3''-oxo-homoorientin) and 3'-dehydromangiferin (3'-oxo-mangiferin). This Arthrobacter globiformis (strain ATCC 8010 / DSM 20124 / JCM 1332 / NBRC 12137 / NCIMB 8907 / NRRL B-2979 / 168) protein is C-glycoside deglycosidase alpha subunit.